The sequence spans 212 residues: Cyclin-P4-1 (212 aa).

It belongs to the cyclin family. Cyclin U/P subfamily.

This Oryza sativa subsp. japonica (Rice) protein is Cyclin-P4-1 (CYCP4-1).